The following is a 369-amino-acid chain: Cyclic AMP receptor-like protein A (369 aa).

Residues 1-4 (MIQI) are Extracellular-facing. Residues 5–22 (LLSTFISFIIIIVSSNDI) form a helical membrane-spanning segment. At 23–72 (RSGENDNFNNNKMINNFLTTITTNDTIIIKETESPNDYDFSKEQIESLDK) the chain is on the cytoplasmic side. Residues 73–93 (IVYFSSTMGIVGALFIIVSFF) traverse the membrane as a helical segment. The Extracellular portion of the chain corresponds to 94 to 100 (LFKAART). The chain crosses the membrane as a helical span at residues 101–121 (FATKMIFFLSLSDLFAAIFYL). Residues 122 to 146 (PYYRDSDIMCNLQGMGLVFFLSSSY) are Cytoplasmic-facing. Residues 147-167 (LWTMCISISLFMVFFTTIFEL) traverse the membrane as a helical segment. Residues 168–173 (NHWFKY) are Extracellular-facing. Residues 174–194 (FHFICWGIPLFTAIISLIFHA) traverse the membrane as a helical segment. At 195–212 (YGKTGSWCFISDPTSIFR) the chain is on the cytoplasmic side. Residues 213–233 (LLYYLPLIVVFFINLVVFIAI) traverse the membrane as a helical segment. Over 234 to 247 (RWKISQHSNSLVSR) the chain is Extracellular. Residues 248 to 268 (VNIIVSFYLIAFSLSQLPTII) traverse the membrane as a helical segment. The Cytoplasmic portion of the chain corresponds to 269-369 (NSIQNFSDPD…KLIIDDYNRV (101 aa)).

This sequence belongs to the G-protein coupled receptor 5 family.

Its subcellular location is the membrane. In terms of biological role, receptor for cAMP which may play a role in prestalk cell differentiation. May act as a negative regulator of cell growth. This chain is Cyclic AMP receptor-like protein A (crlA), found in Dictyostelium discoideum (Social amoeba).